The following is a 142-amino-acid chain: Low molecular weight protein-tyrosine-phosphatase Ptp (142 aa).

Cysteine 10 (nucleophile) is an active-site residue. The active site involves arginine 16. The Proton donor role is filled by aspartate 115.

The protein belongs to the low molecular weight phosphotyrosine protein phosphatase family.

The catalysed reaction is O-phospho-L-tyrosyl-[protein] + H2O = L-tyrosyl-[protein] + phosphate. It participates in glycan metabolism; exopolysaccharide biosynthesis. Inhibited by ammonium molybdate, sodium orthovanadate, N-ethylmaleimide and iodoacetic acid. Dephosphorylates ptk. May be involved in the production and the transport of exopolysaccharides. The chain is Low molecular weight protein-tyrosine-phosphatase Ptp (ptp) from Acinetobacter johnsonii.